A 280-amino-acid polypeptide reads, in one-letter code: Fructose-1,6-bisphosphatase class 1 (280 aa).

Mg(2+) contacts are provided by glutamate 64, aspartate 83, leucine 85, and aspartate 86. Substrate contacts are provided by residues 86-89, tyrosine 189, and lysine 220; that span reads DGSS. Glutamate 226 is a binding site for Mg(2+).

This sequence belongs to the FBPase class 1 family. As to quaternary structure, homotetramer. Requires Mg(2+) as cofactor.

It localises to the cytoplasm. It catalyses the reaction beta-D-fructose 1,6-bisphosphate + H2O = beta-D-fructose 6-phosphate + phosphate. Its pathway is carbohydrate biosynthesis; gluconeogenesis. This is Fructose-1,6-bisphosphatase class 1 from Campylobacter jejuni subsp. doylei (strain ATCC BAA-1458 / RM4099 / 269.97).